The primary structure comprises 20 residues: Unknown protein NF045 from 2D-PAGE (20 aa).

In Naegleria fowleri (Brain eating amoeba), this protein is Unknown protein NF045 from 2D-PAGE.